Here is a 189-residue protein sequence, read N- to C-terminus: Putative manganese efflux pump MntP (189 aa).

6 consecutive transmembrane segments (helical) span residues 8–28 (FLSL…GFSI), 39–59 (IALF…SAGL), 65–85 (ISSF…GKMI), 106–126 (LTTL…GLSV), 131–151 (ILLA…IGVF), and 166–186 (IVGG…HLGF).

The protein belongs to the MntP (TC 9.B.29) family.

The protein localises to the cell inner membrane. In terms of biological role, probably functions as a manganese efflux pump. The polypeptide is Putative manganese efflux pump MntP (Gloeothece citriformis (strain PCC 7424) (Cyanothece sp. (strain PCC 7424))).